The chain runs to 421 residues: Anthranilate synthase component 1 (421 aa).

L-tryptophan-binding positions include serine 31 and 207 to 209 (PYM). 242–243 (GT) contributes to the chorismate binding site. Glutamate 269 lines the Mg(2+) pocket. Residues tyrosine 357, arginine 377, 391-393 (GAG), and glycine 393 contribute to the chorismate site. Residue glutamate 406 coordinates Mg(2+).

Belongs to the anthranilate synthase component I family. As to quaternary structure, heterotetramer consisting of two non-identical subunits: a beta subunit (TrpG) and a large alpha subunit (TrpE). Mg(2+) is required as a cofactor.

The enzyme catalyses chorismate + L-glutamine = anthranilate + pyruvate + L-glutamate + H(+). The protein operates within amino-acid biosynthesis; L-tryptophan biosynthesis; L-tryptophan from chorismate: step 1/5. With respect to regulation, cooperatively feedback inhibited by tryptophan. Functionally, part of a heterotetrameric complex that catalyzes the two-step biosynthesis of anthranilate, an intermediate in the biosynthesis of L-tryptophan. In the first step, the glutamine-binding beta subunit (TrpG) of anthranilate synthase (AS) provides the glutamine amidotransferase activity which generates ammonia as a substrate that, along with chorismate, is used in the second step, catalyzed by the large alpha subunit of AS (TrpE) to produce anthranilate. In the absence of TrpG, TrpE can synthesize anthranilate directly from chorismate and high concentrations of ammonia. This chain is Anthranilate synthase component 1 (trpE), found in Saccharolobus solfataricus (strain ATCC 35092 / DSM 1617 / JCM 11322 / P2) (Sulfolobus solfataricus).